Here is a 299-residue protein sequence, read N- to C-terminus: Oxygen-dependent coproporphyrinogen-III oxidase (299 aa).

Ser-92 provides a ligand contact to substrate. Mn(2+)-binding residues include His-96 and His-106. The active-site Proton donor is the His-106. Position 108–110 (108–110 (NVR)) interacts with substrate. 2 residues coordinate Mn(2+): His-145 and His-175. The interval 240–275 (YVEFNLVWDRGTLFGLQTGGRTESILMSMPPLVRWE) is important for dimerization. Substrate is bound at residue 258–260 (GGR).

It belongs to the aerobic coproporphyrinogen-III oxidase family. As to quaternary structure, homodimer. Mn(2+) is required as a cofactor.

The protein resides in the cytoplasm. It catalyses the reaction coproporphyrinogen III + O2 + 2 H(+) = protoporphyrinogen IX + 2 CO2 + 2 H2O. The protein operates within porphyrin-containing compound metabolism; protoporphyrin-IX biosynthesis; protoporphyrinogen-IX from coproporphyrinogen-III (O2 route): step 1/1. Functionally, involved in the heme biosynthesis. Catalyzes the aerobic oxidative decarboxylation of propionate groups of rings A and B of coproporphyrinogen-III to yield the vinyl groups in protoporphyrinogen-IX. In Escherichia fergusonii (strain ATCC 35469 / DSM 13698 / CCUG 18766 / IAM 14443 / JCM 21226 / LMG 7866 / NBRC 102419 / NCTC 12128 / CDC 0568-73), this protein is Oxygen-dependent coproporphyrinogen-III oxidase.